A 117-amino-acid polypeptide reads, in one-letter code: Large ribosomal subunit protein bL20 (117 aa).

Belongs to the bacterial ribosomal protein bL20 family.

Binds directly to 23S ribosomal RNA and is necessary for the in vitro assembly process of the 50S ribosomal subunit. It is not involved in the protein synthesizing functions of that subunit. This chain is Large ribosomal subunit protein bL20, found in Actinobacillus succinogenes (strain ATCC 55618 / DSM 22257 / CCUG 43843 / 130Z).